We begin with the raw amino-acid sequence, 186 residues long: Elongation factor P (186 aa).

Belongs to the elongation factor P family.

It is found in the cytoplasm. It participates in protein biosynthesis; polypeptide chain elongation. Functionally, involved in peptide bond synthesis. Stimulates efficient translation and peptide-bond synthesis on native or reconstituted 70S ribosomes in vitro. Probably functions indirectly by altering the affinity of the ribosome for aminoacyl-tRNA, thus increasing their reactivity as acceptors for peptidyl transferase. This is Elongation factor P from Synechococcus sp. (strain CC9902).